A 727-amino-acid polypeptide reads, in one-letter code: YTH domain-containing protein 1 (727 aa).

Residues 1–12 (MAADSREEKDGE) are compositionally biased toward basic and acidic residues. The interval 1–338 (MAADSREEKD…KHEKLSSSVR (338 aa)) is disordered. Residue serine 35 is modified to Phosphoserine. Residues 50-59 (DRMESTDTKR) show a composition bias toward basic and acidic residues. The segment covering 63 to 90 (SVHSRQLVSKPLSSSVSNNKRIVSTKGK) has biased composition (polar residues). The segment covering 91–115 (SATEYKNEEYQRSERNKRLDADRKI) has biased composition (basic and acidic residues). Lysine 96 participates in a covalent cross-link: Glycyl lysine isopeptide (Lys-Gly) (interchain with G-Cter in SUMO2). Phosphoserine occurs at positions 118 and 120. Basic and acidic residues predominate over residues 124–144 (EPYKNQPEKTCVRKRDPERRA). Phosphoserine is present on serine 146. Threonine 148 bears the Phosphothreonine mark. Composition is skewed to basic and acidic residues over residues 151–163 (GSERIGLEVDRRA) and 170–185 (SKEEVNSEEYGSDHET). Residues 199–254 (ENEEEGVEEDVEEDEEVEEDAEEDEEVDEDGEEEEEEEEEEEEEEEEEEEEYEQDE) are compositionally biased toward acidic residues. Basic and acidic residues predominate over residues 255-270 (RDQKEEGNDYDTRSEA). Residues 280–289 (FTDGSVRSGS) show a composition bias toward polar residues. Phosphoserine is present on residues serine 308, serine 315, serine 317, serine 318, and serine 320. Over residues 315-325 (SGSSASESYAG) the composition is skewed to low complexity. The YTH domain maps to 355–492 (ARFFLIKSNN…ECGTQLCLLF (138 aa)). RNA is bound by residues 361–363 (KSN) and 377–378 (WS). Serine 424 is subject to Phosphoserine. Tryptophan 428 lines the RNA pocket. The residue at position 435 (serine 435) is a Phosphoserine. RNA is bound at residue aspartate 476. Over residues 508 to 523 (RHKRRMHSQPRSRGRP) the composition is skewed to basic residues. Disordered stretches follow at residues 508–564 (RHKR…PGYL), 607–643 (GMPPYPGMEQPPHHPYYQHHAPPPQAHPPYSGHHPVP), and 669–727 (AVVS…RYRR). The span at 524 to 564 (SRREPVRDVGRRRPEDYDIHNSRKKPRIDYPPEFHQRPGYL) shows a compositional bias: basic and acidic residues. Phosphoserine is present on serine 545. The span at 679 to 727 (RERDRERERDRPRDNRRDRERDRGRDRERERERLCDRDRDRGERGRYRR) shows a compositional bias: basic and acidic residues.

In terms of assembly, interacts with SRSF1. Interacts with SRSF2. Interacts with SRSF3. Interacts with SRSF7. Interacts with SRSF10. Interacts with CPSF6. Interacts with KHDRBS1/SAM68. Interacts with TRA2B. Interacts with KHDRBS3. Interacts with EMD. Interacts with RBMX. Interacts with ZCCHC8. Tyrosine phosphorylated.

Its subcellular location is the nucleus. The protein resides in the nucleus speckle. Functionally, regulator of alternative splicing that specifically recognizes and binds N6-methyladenosine (m6A)-containing RNAs. M6A is a modification present at internal sites of mRNAs and some non-coding RNAs and plays a role in the efficiency of mRNA splicing, processing and stability. Acts as a key regulator of exon-inclusion or exon-skipping during alternative splicing via interaction with mRNA splicing factors SRSF3 and SRSF10. Specifically binds m6A-containing mRNAs and promotes recruitment of SRSF3 to its mRNA-binding elements adjacent to m6A sites, leading to exon-inclusion during alternative splicing. In contrast, interaction with SRSF3 prevents interaction with SRSF10, a splicing factor that promotes exon skipping: this prevents SRSF10 from binding to its mRNA-binding sites close to m6A-containing regions, leading to inhibit exon skipping during alternative splicing. May also regulate alternative splice site selection. Also involved in nuclear export of m6A-containing mRNAs via interaction with SRSF3: interaction with SRSF3 facilitates m6A-containing mRNA-binding to both SRSF3 and NXF1, promoting mRNA nuclear export. Involved in S-adenosyl-L-methionine homeostasis by regulating expression of MAT2A transcripts, probably by binding m6A-containing MAT2A mRNAs. Also recognizes and binds m6A on other RNA molecules. Involved in random X inactivation mediated by Xist RNA: recognizes and binds m6A-containing Xist and promotes transcription repression activity of Xist. Also recognizes and binds m6A-containing single-stranded DNA. Involved in germline development: required for spermatogonial development in males and oocyte growth and maturation in females, probably via its role in alternative splicing. This Homo sapiens (Human) protein is YTH domain-containing protein 1.